We begin with the raw amino-acid sequence, 374 residues long: Tuliposide A-converting enzyme b3, amyloplastic (374 aa).

An amyloplast-targeting transit peptide spans 1 to 68; sequence MSAALFCGPP…TNSSLSPSPT (68 aa). S226 (acyl-ester intermediate) is an active-site residue. Active-site charge relay system residues include D316 and H348.

The protein belongs to the AB hydrolase superfamily. In terms of assembly, homodimer. Highly expressed in pistil and bulb scales. Lower expression in stem, and barely detected in root, leaf, petal and stamen.

The protein localises to the plastid. It is found in the amyloplast. The enzyme catalyses 6-tuliposide A = tulipalin A + D-glucose. Lactone-forming carboxylesterases, specifically catalyzing intramolecular transesterification, but not hydrolysis. Involved in the biosynthesis of tulipalins, defensive chemicals that show antimicrobial activities against a broad range of strains of bacteria and fungi. Substrates are 6-tuliposide A &gt; 6-tuliposide B. This chain is Tuliposide A-converting enzyme b3, amyloplastic (TCEA-B3), found in Tulipa gesneriana (Garden tulip).